The primary structure comprises 340 residues: MPIRDQIIQIVRGHDLTEEQAAEAMEEIMTGVATPAQVAALLTALHLKGETDAEIAGMARVMRAKAIPVHFDGPLLDTCGTGGDSAGTFNISTTAAFIAAGAGATVAKHGNRAMSSVCGSADVLEGLGVTIDLDAAGVARCLEQAGIGFMFAQKFHPAMRFVGPVRREIGIRTIFNALGPLSNPAQARHQTLGVADPALAEKMARALYLLGAQHALVVHGHGGLDELTLSGPNLVIEVRAGHKPRRYEVSAGDLGLTPAPREALLGGDVSTNVAIVRAILSGEERGARRDVALLNAAAALVAADYAADLREGLQQARQSLESGAALARLERLITVSSINR.

5-phospho-alpha-D-ribose 1-diphosphate contacts are provided by residues glycine 80, 83–84, threonine 88, 90–93, 108–116, and serine 120; these read GD, NIST, and KHGNRAMSS. Anthranilate is bound at residue glycine 80. Serine 92 is a binding site for Mg(2+). Anthranilate is bound at residue asparagine 111. Residue arginine 166 participates in anthranilate binding. Mg(2+) is bound by residues aspartate 225 and glutamate 226.

It belongs to the anthranilate phosphoribosyltransferase family. Homodimer. The cofactor is Mg(2+).

The enzyme catalyses N-(5-phospho-beta-D-ribosyl)anthranilate + diphosphate = 5-phospho-alpha-D-ribose 1-diphosphate + anthranilate. Its pathway is amino-acid biosynthesis; L-tryptophan biosynthesis; L-tryptophan from chorismate: step 2/5. Its function is as follows. Catalyzes the transfer of the phosphoribosyl group of 5-phosphorylribose-1-pyrophosphate (PRPP) to anthranilate to yield N-(5'-phosphoribosyl)-anthranilate (PRA). This is Anthranilate phosphoribosyltransferase from Roseiflexus castenholzii (strain DSM 13941 / HLO8).